We begin with the raw amino-acid sequence, 67 residues long: Large ribosomal subunit protein bL35 (67 aa).

Residues 22 to 52 (VLAGPGKKRHNLSARSQKAKRQNRGSQVLTH) are disordered. Residues 27 to 44 (GKKRHNLSARSQKAKRQN) show a composition bias toward basic residues.

It belongs to the bacterial ribosomal protein bL35 family.

In Granulibacter bethesdensis (strain ATCC BAA-1260 / CGDNIH1), this protein is Large ribosomal subunit protein bL35.